A 360-amino-acid chain; its full sequence is MADSVLIAAGGTGGHVFPALAVADALRAQGVEVTFAGTATGMEARLVPERGYTLHTLDMQGLRGKGIRRWLRAPWRVSRAILQARRILRQTRSHVVLGMGGYVTAPVGIAAWTLGRPLCLHEQNAVAGLSNRLLAPLARRVFLGFPGARLARGEWVGNPVREAIHALPTPQERFHDRKGPVRLLIMGGSQGAQVLNAVSAAALSGMTDAERPAIWHQTGRDHAESTRAAYAQARIDAKVEPFIDDMAAALGWADLALCRAGAATIAELAAAGLGAILIPFPFAVDDHQAANARFLEKAGAARMLRQEGLDALQLRDVLRPLLADPELRLRWAEAARRQAKGDAAATVAAACIECAGGIDA.

UDP-N-acetyl-alpha-D-glucosamine is bound by residues 12-14 (TGG), Asn-124, Arg-161, Ser-189, Ile-243, and Gln-288.

This sequence belongs to the glycosyltransferase 28 family. MurG subfamily.

The protein localises to the cell inner membrane. It catalyses the reaction di-trans,octa-cis-undecaprenyl diphospho-N-acetyl-alpha-D-muramoyl-L-alanyl-D-glutamyl-meso-2,6-diaminopimeloyl-D-alanyl-D-alanine + UDP-N-acetyl-alpha-D-glucosamine = di-trans,octa-cis-undecaprenyl diphospho-[N-acetyl-alpha-D-glucosaminyl-(1-&gt;4)]-N-acetyl-alpha-D-muramoyl-L-alanyl-D-glutamyl-meso-2,6-diaminopimeloyl-D-alanyl-D-alanine + UDP + H(+). It participates in cell wall biogenesis; peptidoglycan biosynthesis. Functionally, cell wall formation. Catalyzes the transfer of a GlcNAc subunit on undecaprenyl-pyrophosphoryl-MurNAc-pentapeptide (lipid intermediate I) to form undecaprenyl-pyrophosphoryl-MurNAc-(pentapeptide)GlcNAc (lipid intermediate II). The protein is UDP-N-acetylglucosamine--N-acetylmuramyl-(pentapeptide) pyrophosphoryl-undecaprenol N-acetylglucosamine transferase of Acidithiobacillus ferrooxidans (strain ATCC 23270 / DSM 14882 / CIP 104768 / NCIMB 8455) (Ferrobacillus ferrooxidans (strain ATCC 23270)).